The chain runs to 461 residues: Vitamin K-dependent protein C (461 aa).

The signal sequence occupies residues 1-18 (MWQLTSLLLFVATWGISG). Residue threonine 19 is glycosylated (O-linked (GalNAc...) threonine). A propeptide spanning residues 19–42 (TPAPLDSVFSSSERAHQVLRIRKR) is cleaved from the precursor. Positions 43–88 (ANSFLEELRHSSLERECIEEICDFEEAKEIFQNVDDTLAFWSKHVD) constitute a Gla domain. 9 positions are modified to 4-carboxyglutamate: glutamate 48, glutamate 49, glutamate 56, glutamate 58, glutamate 61, glutamate 62, glutamate 67, glutamate 68, and glutamate 71. The cysteines at positions 59 and 64 are disulfide-linked. Cystine bridges form between cysteine 92–cysteine 111, cysteine 101–cysteine 106, cysteine 105–cysteine 120, and cysteine 122–cysteine 131. 2 consecutive EGF-like domains span residues 97 to 132 (LEHPCASLCCGHGTCIDGIGSFSCDCRSGWEGRFCQ) and 136 to 176 (SFLN…LQCH). At aspartate 113 the chain carries (3R)-3-hydroxyaspartate. An N-linked (GlcNAc...) asparagine glycan is attached at asparagine 139. 5 disulfide bridges follow: cysteine 140-cysteine 151, cysteine 147-cysteine 160, cysteine 162-cysteine 175, cysteine 183-cysteine 319, and cysteine 238-cysteine 254. The Peptidase S1 domain maps to 212–450 (LIDGKMTRRG…YLDWIHGHIR (239 aa)). Catalysis depends on histidine 253, which acts as the Charge relay system. Asparagine 290 is a glycosylation site (N-linked (GlcNAc...) asparagine). Aspartate 299 acts as the Charge relay system in catalysis. Serine 347 is subject to Phosphoserine; by FAM20C. Asparagine 355 is a glycosylation site (N-linked (GlcNAc...) asparagine). A glycan (N-linked (GlcNAc...) asparagine; atypical; partial) is linked at asparagine 371. Disulfide bonds link cysteine 373-cysteine 387 and cysteine 398-cysteine 426. Residue serine 402 is the Charge relay system of the active site.

It belongs to the peptidase S1 family. As to quaternary structure, synthesized as a single chain precursor, which is cleaved into a light chain and a heavy chain held together by a disulfide bond. The enzyme is then activated by thrombin, which cleaves a tetradecapeptide from the amino end of the heavy chain; this reaction, which occurs at the surface of endothelial cells, is strongly promoted by thrombomodulin. Interacts (activated) with iripin-8, a serine protease inhibitor from Ixodes ricinus saliva. Post-translationally, the vitamin K-dependent, enzymatic carboxylation of some Glu residues allows the modified protein to bind calcium. In terms of processing, N- and O-glycosylated. Partial (70%) N-glycosylation of Asn-371 with an atypical N-X-C site produces a higher molecular weight form referred to as alpha. The lower molecular weight form, not N-glycosylated at Asn-371, is beta. O-glycosylated with core 1 or possibly core 8 glycans. The iron and 2-oxoglutarate dependent 3-hydroxylation of aspartate and asparagine is (R) stereospecific within EGF domains. Post-translationally, may be phosphorylated on a Ser or Thr in a region (AA 25-30) of the propeptide. As to expression, plasma; synthesized in the liver.

The protein resides in the secreted. It localises to the golgi apparatus. It is found in the endoplasmic reticulum. It catalyses the reaction Degradation of blood coagulation factors Va and VIIIa.. Functionally, protein C is a vitamin K-dependent serine protease that regulates blood coagulation by inactivating factors Va and VIIIa in the presence of calcium ions and phospholipids. Exerts a protective effect on the endothelial cell barrier function. The protein is Vitamin K-dependent protein C (PROC) of Homo sapiens (Human).